We begin with the raw amino-acid sequence, 127 residues long: MYPHLTGLGIHDPSQIERYSLRQEAHKDVLKIYFHKQKGEFFAKSVKFKYPRQVKNVLVDSGSHQYKEVTEINRNLTLVIDELNKITKPPKQEDVDIKQKILTDLKHLEKVVASKIAEIEADLEKLK.

The protein belongs to the UPF0325 family.

The polypeptide is UPF0325 protein VV1_1856 (Vibrio vulnificus (strain CMCP6)).